The chain runs to 207 residues: ATP-dependent Clp protease proteolytic subunit (207 aa).

The active-site Nucleophile is serine 112. Histidine 137 is an active-site residue.

Belongs to the peptidase S14 family. As to quaternary structure, fourteen ClpP subunits assemble into 2 heptameric rings which stack back to back to give a disk-like structure with a central cavity, resembling the structure of eukaryotic proteasomes.

The protein localises to the cytoplasm. The catalysed reaction is Hydrolysis of proteins to small peptides in the presence of ATP and magnesium. alpha-casein is the usual test substrate. In the absence of ATP, only oligopeptides shorter than five residues are hydrolyzed (such as succinyl-Leu-Tyr-|-NHMec, and Leu-Tyr-Leu-|-Tyr-Trp, in which cleavage of the -Tyr-|-Leu- and -Tyr-|-Trp bonds also occurs).. Functionally, cleaves peptides in various proteins in a process that requires ATP hydrolysis. Has a chymotrypsin-like activity. Plays a major role in the degradation of misfolded proteins. The sequence is that of ATP-dependent Clp protease proteolytic subunit from Bacteroides fragilis (strain ATCC 25285 / DSM 2151 / CCUG 4856 / JCM 11019 / LMG 10263 / NCTC 9343 / Onslow / VPI 2553 / EN-2).